Reading from the N-terminus, the 210-residue chain is Sortase A (210 aa).

Over Met1 to Arg5 the chain is Cytoplasmic. A helical membrane pass occupies residues Ile6–Phe26. Topologically, residues Tyr27–Lys210 are extracellular. The active-site Proton donor/acceptor is the His126. Cys187 (acyl-thioester intermediate) is an active-site residue.

The protein belongs to the bacterial sortase family. Class A subfamily.

The protein resides in the cell membrane. Inhibited by thiol-reactive reagents. In terms of biological role, transpeptidase that anchors surface proteins to the cell wall. Recognizes and modifies its substrate by proteolytic cleavage of a C-terminal sorting signal. Following cleavage, a covalent intermediate is formed via a thioester bond between the sortase and its substrate, which is then transferred and covalently attached to the cell wall. This sortase recognizes a Leu-Pro-x-Thr-Gly (LPXTG) motif, which is cleaved by the sortase between the threonine and glycine residues. Important for growth in macrophages. May be critical in the early stages of inhalation anthrax. This is Sortase A from Bacillus anthracis.